The following is a 179-amino-acid chain: Large ribosomal subunit protein uL6 (179 aa).

It belongs to the universal ribosomal protein uL6 family. In terms of assembly, part of the 50S ribosomal subunit.

Its function is as follows. This protein binds to the 23S rRNA, and is important in its secondary structure. It is located near the subunit interface in the base of the L7/L12 stalk, and near the tRNA binding site of the peptidyltransferase center. This is Large ribosomal subunit protein uL6 from Mycobacterium tuberculosis (strain ATCC 25618 / H37Rv).